We begin with the raw amino-acid sequence, 501 residues long: Tegument protein US24 (501 aa).

Belongs to the herpesviridae US22 family.

Its subcellular location is the virion tegument. The chain is Tegument protein US24 (US24) from Human cytomegalovirus (strain AD169) (HHV-5).